The sequence spans 239 residues: Ditrans,polycis-undecaprenyl-diphosphate synthase ((2E,6E)-farnesyl-diphosphate specific) (239 aa).

Asp18 is an active-site residue. Asp18 serves as a coordination point for Mg(2+). Substrate contacts are provided by residues 19 to 22 (GNGR), Trp23, Arg31, His35, and 63 to 65 (SSE). The active-site Proton acceptor is the Asn66. Substrate-binding positions include Trp67, Arg69, Arg186, and 192–194 (RIS). Position 205 (Glu205) interacts with Mg(2+).

Belongs to the UPP synthase family. As to quaternary structure, homodimer. Mg(2+) serves as cofactor.

It catalyses the reaction 8 isopentenyl diphosphate + (2E,6E)-farnesyl diphosphate = di-trans,octa-cis-undecaprenyl diphosphate + 8 diphosphate. Its function is as follows. Catalyzes the sequential condensation of isopentenyl diphosphate (IPP) with (2E,6E)-farnesyl diphosphate (E,E-FPP) to yield (2Z,6Z,10Z,14Z,18Z,22Z,26Z,30Z,34E,38E)-undecaprenyl diphosphate (di-trans,octa-cis-UPP). UPP is the precursor of glycosyl carrier lipid in the biosynthesis of bacterial cell wall polysaccharide components such as peptidoglycan and lipopolysaccharide. The polypeptide is Ditrans,polycis-undecaprenyl-diphosphate synthase ((2E,6E)-farnesyl-diphosphate specific) (Haemophilus influenzae (strain ATCC 51907 / DSM 11121 / KW20 / Rd)).